The chain runs to 80 residues: ATP synthase F(1) complex subunit delta, mitochondrial (80 aa).

A mitochondrion-targeting transit peptide spans 1–22; it reads MLPATLLRXSGLGRVVRQARAY.

Belongs to the ATPase epsilon chain family. Component of the ATP synthase complex composed at least of ATP5F1A/subunit alpha, ATP5F1B/subunit beta, ATP5MC1/subunit c (homooctomer), MT-ATP6/subunit a, MT-ATP8/subunit 8, ATP5ME/subunit e, ATP5MF/subunit f, ATP5MG/subunit g, ATP5MK/subunit k, ATP5MJ/subunit j, ATP5F1C/subunit gamma, ATP5F1D/subunit delta, ATP5F1E/subunit epsilon, ATP5PF/subunit F6, ATP5PB/subunit b, ATP5PD/subunit d, ATP5PO/subunit OSCP. ATP synthase complex consists of a soluble F(1) head domain (subunits alpha(3) and beta(3)) - the catalytic core - and a membrane F(0) domain - the membrane proton channel (subunits c, a, 8, e, f, g, k and j). These two domains are linked by a central stalk (subunits gamma, delta, and epsilon) rotating inside the F1 region and a stationary peripheral stalk (subunits F6, b, d, and OSCP). Component of a complex composed at least by ATPIF1, ATP5F1A, ATP5F1B, ATP5F1C AND ATP5F1E.

It localises to the mitochondrion. The protein localises to the mitochondrion inner membrane. Subunit delta, of the mitochondrial membrane ATP synthase complex (F(1)F(0) ATP synthase or Complex V) that produces ATP from ADP in the presence of a proton gradient across the membrane which is generated by electron transport complexes of the respiratory chain. ATP synthase complex consist of a soluble F(1) head domain - the catalytic core - and a membrane F(1) domain - the membrane proton channel. These two domains are linked by a central stalk rotating inside the F(1) region and a stationary peripheral stalk. During catalysis, ATP synthesis in the catalytic domain of F(1) is coupled via a rotary mechanism of the central stalk subunits to proton translocation. In vivo, can only synthesize ATP although its ATP hydrolase activity can be activated artificially in vitro. With the central stalk subunit gamma, is essential for the biogenesis of F(1) catalytic part of the ATP synthase complex namely in the formation of F1 assembly intermediate. The protein is ATP synthase F(1) complex subunit delta, mitochondrial of Sus scrofa (Pig).